Reading from the N-terminus, the 884-residue chain is MGVSKIESTQASTYIDDIHDKVTRASNVIVPLSPISVFAARSPWARLEHKSFDEIAHWLKETRKVDMYPARMTILEANQKGEIDDAYVEQFFQQWLNDTALKIPRENAAQYGRNALKLETLETPTDIKSQLEALVSDLNEQVKFESENTVPLKSTYILDEKNERLIDTVDYHTIKWCKLYIDDAQSGWTMPNRDKGLFYAWRRLVAYDPALTKDQRARLKSLPNEAEDLMQQALSYLNISEADAQTYLENHLLSLPGWAGMMLWQDEHNHKVHDLLFSYLAIRIAMEWAIVEPYLPVSQPEDLNDMNKEELIASWIQWGNFSMQSWKALSIEAQQAHIQFAYRFNEQFCRKLWLDAWEATYNQQLKAMIGPKSSVEAEQQSQTLVQMAFCIDVRSEPFRKHIEANGPFETIGIAGFFGLPIEKAELGKKYSHPSLPVMNQPQHKIKEYTHEHEPNAFQQRKHALESVTYTFKKMKQNVLPSLLLPELSGPWLSLQMFTRSFIPKSVGSVIRKFYTSWLKKPNDTALTLNYEPQHQHNHRHIHLEDDLPVGFTDEEKVNYALQALKLMDLTDDFAPLVVMCGHGSQSANNPYAASLDCGACGGAASGFNAKVLAQLCNLPEVRQGLLQEGVAIPETTIFAAAEHQTSIDTLTWIYVPKLTEAARNAYENIEAAMPKISYQANKKRLSQLPNNNLTNRNPNHEVYRLTNDWSEIRPEWGLAKNAAFIIGQRELTKQSDLAGRAFLHNYNWKNDENGTILENIIAGPALVAQWINLQYYASTVAPHYYGSGSKTTQSVTAGIGVMQGNASDLLTGLPWQSVMSADNKMYHSPIRLVVVIQAPQAFISRLLENDETFKQKVMHGWVRLASVDEDNHWHEWSNEVKKFS.

Zn(2+) contacts are provided by cysteine 390, aspartate 392, histidine 582, and cysteine 597.

This sequence belongs to the inorganic carbon transporter (TC 9.A.2) DabA family. Forms a complex with DabB. Zn(2+) is required as a cofactor.

The protein localises to the cell membrane. Its function is as follows. Part of an energy-coupled inorganic carbon pump. The chain is Probable inorganic carbon transporter subunit DabA from Staphylococcus saprophyticus subsp. saprophyticus (strain ATCC 15305 / DSM 20229 / NCIMB 8711 / NCTC 7292 / S-41).